A 291-amino-acid chain; its full sequence is Arabinogalactan O-methyltransferase 2 (291 aa).

The chain crosses the membrane as a helical span at residues 18 to 38 (WFLAVALAGLIGGAMLITSFI).

It belongs to the methyltransferase superfamily.

It localises to the golgi apparatus membrane. In terms of biological role, involved in the methylation of glucuronic acid of different plant cell wall component, but mainly on side chains of arabinogalactans. The polypeptide is Arabinogalactan O-methyltransferase 2 (Arabidopsis thaliana (Mouse-ear cress)).